Reading from the N-terminus, the 77-residue chain is DNA-directed RNA polymerase subunit Rpo5 (77 aa).

The protein belongs to the archaeal Rpo5/eukaryotic RPB5 RNA polymerase subunit family. As to quaternary structure, part of the RNA polymerase complex.

The protein resides in the cytoplasm. It carries out the reaction RNA(n) + a ribonucleoside 5'-triphosphate = RNA(n+1) + diphosphate. In terms of biological role, DNA-dependent RNA polymerase (RNAP) catalyzes the transcription of DNA into RNA using the four ribonucleoside triphosphates as substrates. The chain is DNA-directed RNA polymerase subunit Rpo5 from Methanothermobacter thermautotrophicus (strain ATCC 29096 / DSM 1053 / JCM 10044 / NBRC 100330 / Delta H) (Methanobacterium thermoautotrophicum).